Consider the following 120-residue polypeptide: Large ribosomal subunit protein bL20 (120 aa).

Belongs to the bacterial ribosomal protein bL20 family.

Functionally, binds directly to 23S ribosomal RNA and is necessary for the in vitro assembly process of the 50S ribosomal subunit. It is not involved in the protein synthesizing functions of that subunit. This Baumannia cicadellinicola subsp. Homalodisca coagulata protein is Large ribosomal subunit protein bL20.